A 39-amino-acid polypeptide reads, in one-letter code: Pro-opiomelanocortin (39 aa).

Position 13 is a methionine amide (Met-13).

It belongs to the POMC family.

The protein localises to the secreted. In terms of biological role, precursor protein for pituitary hormones that regulate stress and environmental adaptation. Its function is as follows. Stimulates the adrenal glands to release cortisol. Anorexigenic peptide. Increases the pigmentation of skin by increasing melanin production in melanocytes. This Squalus acanthias (Spiny dogfish) protein is Pro-opiomelanocortin (pomc).